The sequence spans 334 residues: Chorismatase (334 aa).

4 residues coordinate substrate: Tyr143, Arg150, Tyr203, and Arg216. The Proton acceptor role is filled by Glu328.

It belongs to the FkbO/Hyg5 family. As to quaternary structure, monomer.

It catalyses the reaction chorismate + H2O = (3R,4R)-3,4-dihydroxy-3,4-dihydrobenzoate + pyruvate. Functionally, involved in the biosynthesis of the macrocyclic amino acid-linked polyketides rapamycin which is a potent immunosuppressant that prevents T-cell proliferation through initial binding to the immunophilin FKBP12. Catalyzes the hydrolysis of chorismate via a 1,4-conjugate elimination of water to yield (4R,5R)-4,5-dihydroxycyclohexa-1,5-dienecarboxylic acid (DCDC). This chain is Chorismatase (rapK), found in Streptomyces rapamycinicus (strain ATCC 29253 / DSM 41530 / NRRL 5491 / AYB-994) (Streptomyces hygroscopicus (strain ATCC 29253)).